The sequence spans 216 residues: FMN-dependent NADH:quinone oxidoreductase (216 aa).

FMN contacts are provided by residues 15-17 (SVS) and 139-142 (SRGG).

The protein belongs to the azoreductase type 1 family. Homodimer. FMN is required as a cofactor.

The catalysed reaction is 2 a quinone + NADH + H(+) = 2 a 1,4-benzosemiquinone + NAD(+). It catalyses the reaction N,N-dimethyl-1,4-phenylenediamine + anthranilate + 2 NAD(+) = 2-(4-dimethylaminophenyl)diazenylbenzoate + 2 NADH + 2 H(+). Quinone reductase that provides resistance to thiol-specific stress caused by electrophilic quinones. Functionally, also exhibits azoreductase activity. Catalyzes the reductive cleavage of the azo bond in aromatic azo compounds to the corresponding amines. The sequence is that of FMN-dependent NADH:quinone oxidoreductase from Acidovorax ebreus (strain TPSY) (Diaphorobacter sp. (strain TPSY)).